Consider the following 161-residue polypeptide: MSKNRSSLQSGPLNSELLEEQKQEIYEAFSLFDMNNDGFLDYHELKVAMKALGFELPKREILDLIDEYDSEGRHLMKYDDFYIVMGEKILKRDPLDEIKRAFQLFDDDHTGKISIKNLRRVAKELGETLTDEELRAMIEEFDLDGDGEINENEFIAICTDS.

EF-hand domains are found at residues 20 to 55 (EQKQEIYEAFSLFDMNNDGFLDYHELKVAMKALGFE), 56 to 91 (LPKREILDLIDEYDSEGRHLMKYDDFYIVMGEKILK), 93 to 128 (DPLDEIKRAFQLFDDDHTGKISIKNLRRVAKELGET), and 129 to 161 (LTDEELRAMIEEFDLDGDGEINENEFIAICTDS). Residues Asp33, Asn35, Asp37, and Glu44 each contribute to the Ca(2+) site. Thr130 bears the Phosphothreonine mark. Residues Asp142, Asp144, Asp146, Glu148, and Glu153 each contribute to the Ca(2+) site.

The protein belongs to the centrin family. Component of the spindle pole body (SPB), acting as the connector of microtubule arrays in the cytoplasm and the nucleoplasm, is involved in nuclear positioning before chromosome segregation, SPB separation, spindle formation, chromosome segregation, nuclear migration into the bud, nuclear reorientation after cytokinesis and nuclear fusion during conjugation. The SPB half-bridge, which is tightly associated with the cytoplasmic side of the nuclear envelope and the SPB, is playing a key role as the starting structure for and in the initiation of SPB duplication in G1. At the SPB half-bridge CDC31 interacts with KAR1, MPS3 and SFI1. Interacts with KIC1. Interacts with VPS13. Associates with nuclear pore complexes (NPCs).

The protein resides in the nucleus envelope. Its subcellular location is the cytoplasm. The protein localises to the cytoskeleton. It is found in the microtubule organizing center. It localises to the spindle pole body. Its function is as follows. Functions as a component of the spindle pole body (SPB) half-bridge. At the SPB, it is recruited by KAR1 and MPS3 to the SPB half-bridge and involved in the initial steps of SPB duplication. Also involved in connection with the protein kinase KIC1 in the maintenance of cell morphology and integrity. May play a role in vesicle-mediated transport, in a VPS13-dependent manner. This Saccharomyces cerevisiae (strain ATCC 204508 / S288c) (Baker's yeast) protein is Cell division control protein 31 (CDC31).